We begin with the raw amino-acid sequence, 225 residues long: C-reactive protein (225 aa).

The signal sequence occupies residues 1-19; it reads MEKLLWCLLIMISFSRTFG. The Pentraxin (PTX) domain occupies 24–225; the sequence is FKKAFVFPKE…DVFIKPQLWS (202 aa). An intrachain disulfide couples Cys-55 to Cys-116. Residues Asn-80, Glu-157, Gln-158, Asp-159, and Gln-169 each coordinate Ca(2+).

It belongs to the pentraxin family. Homopentamer. Pentraxin (or pentaxin) have a discoid arrangement of 5 non-covalently bound subunits. Interacts with FCN1; may regulate monocyte activation by FCN1. Ca(2+) is required as a cofactor. Found in plasma.

The protein localises to the secreted. Its function is as follows. Displays several functions associated with host defense: it promotes agglutination, bacterial capsular swelling, phagocytosis and complement fixation through its calcium-dependent binding to phosphorylcholine. Can interact with DNA and histones and may scavenge nuclear material released from damaged circulating cells. The chain is C-reactive protein (Crp) from Mus musculus (Mouse).